Consider the following 308-residue polypeptide: Bifunctional protein FolD (308 aa).

Residues 171–173 (GRS), serine 198, and isoleucine 239 each bind NADP(+).

This sequence belongs to the tetrahydrofolate dehydrogenase/cyclohydrolase family. Homodimer.

The enzyme catalyses (6R)-5,10-methylene-5,6,7,8-tetrahydrofolate + NADP(+) = (6R)-5,10-methenyltetrahydrofolate + NADPH. It carries out the reaction (6R)-5,10-methenyltetrahydrofolate + H2O = (6R)-10-formyltetrahydrofolate + H(+). It participates in one-carbon metabolism; tetrahydrofolate interconversion. Its function is as follows. Catalyzes the oxidation of 5,10-methylenetetrahydrofolate to 5,10-methenyltetrahydrofolate and then the hydrolysis of 5,10-methenyltetrahydrofolate to 10-formyltetrahydrofolate. This chain is Bifunctional protein FolD, found in Borreliella burgdorferi (strain ZS7) (Borrelia burgdorferi).